The sequence spans 646 residues: Acetyl-coenzyme A synthetase (646 aa).

CoA contacts are provided by residues 189–192 (RGPK), T307, and N331. ATP-binding positions include 383–385 (GEP), 407–412 (DTWWQT), D496, and R511. Residue S519 participates in CoA binding. Position 522 (R522) interacts with ATP. 3 residues coordinate Mg(2+): V533, H535, and V538. R580 contacts CoA. Position 605 is an N6-acetyllysine (K605).

This sequence belongs to the ATP-dependent AMP-binding enzyme family. Mg(2+) is required as a cofactor. Post-translationally, acetylated. Deacetylation by the SIR2-homolog deacetylase activates the enzyme.

It catalyses the reaction acetate + ATP + CoA = acetyl-CoA + AMP + diphosphate. Functionally, catalyzes the conversion of acetate into acetyl-CoA (AcCoA), an essential intermediate at the junction of anabolic and catabolic pathways. AcsA undergoes a two-step reaction. In the first half reaction, AcsA combines acetate with ATP to form acetyl-adenylate (AcAMP) intermediate. In the second half reaction, it can then transfer the acetyl group from AcAMP to the sulfhydryl group of CoA, forming the product AcCoA. The polypeptide is Acetyl-coenzyme A synthetase (Desulfatibacillum aliphaticivorans).